The following is a 610-amino-acid chain: UvrABC system protein C (610 aa).

The GIY-YIG domain occupies 16–94; the sequence is SQPGVYRMYD…IKLYQPRYNV (79 aa). In terms of domain architecture, UVR spans 204–239; that stretch reads DQVLTQLIARMEKASQDLAFEEAARIRDQIQAVRRV.

It belongs to the UvrC family. As to quaternary structure, interacts with UvrB in an incision complex.

The protein localises to the cytoplasm. Functionally, the UvrABC repair system catalyzes the recognition and processing of DNA lesions. UvrC both incises the 5' and 3' sides of the lesion. The N-terminal half is responsible for the 3' incision and the C-terminal half is responsible for the 5' incision. This is UvrABC system protein C from Salmonella typhimurium (strain LT2 / SGSC1412 / ATCC 700720).